Reading from the N-terminus, the 1862-residue chain is Chitin synthase V (1862 aa).

Residues 1–26 (MAMSLPQLGGAGGPHTQPSLPSLPAH) form a disordered region. The Myosin motor domain occupies 1–778 (MAMSLPQLGG…CWMEIAQLGE (778 aa)). Asparagine 63 is a glycosylation site (N-linked (GlcNAc...) asparagine). 104-111 (GESGAGKS) is a binding site for ATP. Residues asparagine 123, asparagine 429, asparagine 483, asparagine 522, and asparagine 560 are each glycosylated (N-linked (GlcNAc...) asparagine). The tract at residues 592–643 (TVSSKPMRAPSVMSRKTHRTGRPSTAYKRQQQEAMEELDQQSQAGESKKNAK) is disordered. Residues 658–682 (LDNVQKAVTDPGTNSYFVFCLKPND) are actin-binding. The next 2 helical transmembrane spans lie at 884-904 (WVAL…RLIG) and 923-943 (MLIW…PMLI). In terms of domain architecture, Cytochrome b5 heme-binding spans 947–1009 (QYVYSSNELS…YAGKDISALF (63 aa)). 3 N-linked (GlcNAc...) asparagine glycosylation sites follow: asparagine 1036, asparagine 1063, and asparagine 1192. A helical membrane pass occupies residues 1202-1222 (FILAISVMLASILVFKFLAAL). 2 N-linked (GlcNAc...) asparagine glycosylation sites follow: asparagine 1459 and asparagine 1565. Transmembrane regions (helical) follow at residues 1590-1610 (FVVF…MYIV), 1623-1643 (VPIT…VIFI), and 1650-1670 (MVGW…GLPL). A glycan (N-linked (GlcNAc...) asparagine) is linked at asparagine 1771. A DEK-C domain is found at 1804-1859 (MPSDDALLAEIRDILKTADLMTVTKKGIKQELERRFNVPLDAKRAYINSATEALLS).

In the N-terminal section; belongs to the TRAFAC class myosin-kinesin ATPase superfamily. Myosin family. The protein in the C-terminal section; belongs to the chitin synthase family. Class V subfamily.

It localises to the cell membrane. It carries out the reaction [(1-&gt;4)-N-acetyl-beta-D-glucosaminyl](n) + UDP-N-acetyl-alpha-D-glucosamine = [(1-&gt;4)-N-acetyl-beta-D-glucosaminyl](n+1) + UDP + H(+). Polymerizes chitin, a structural polymer of the cell wall and septum, by transferring the sugar moiety of UDP-GlcNAc to the non-reducing end of the growing chitin polymer. ChsV and chsVb do perform additive, but not redundant, functions in septum formation. Involved in cell wall integrity and resistance to antimicrobial plant defense compounds such as the tomato phytoanticipin alpha-tomatine or H(2)O(2), and plays a crucial role in vascular colonization and pathogenicity. Also plays an important role in nuclear sorting or distribution. The polypeptide is Chitin synthase V (Fusarium oxysporum f. sp. lycopersici (strain 4287 / CBS 123668 / FGSC 9935 / NRRL 34936) (Fusarium vascular wilt of tomato)).